The primary structure comprises 464 residues: MEAKKLWGGRFEASLEEWVEEFGASIRFDQKLAKYDIQGSLAHVKMLGQTRIISQAEAQVIQAGLEELLEEYEAGKLVFDIRNEDIHMNIESLLTEKIGSVAGKLHTARSRNDQVATDMHLYLKDTLFQVVDKLTNLRQILVDLAQEHVETIMPGYTHLQHAQPISFAQHLLAYYNMFSRDSERFAFNMQHTNVSPLGAAALAGTTFPIDRQMTSDLMGFAKPYSNSLDAVSDRDFILEFLSNASILMMHMSRLCEEIINWCSYEYQFVTLSDTFSTGSSIMPQKKNPDMAELIRGKTGRVYGNLVGLLTVMKSLPLTYNKDLQEDKEGMFDTAETVLISIDILAGMLKTMTVHKERMAQSTEKDFSNATELADYLASKGLPFRQAHEIVGKLVLECSKAGHYLQDVSFETYQAISPLIQADIYDALSSKVAVSRRNSLGGTGFESIADQLKSAKEEIQNAKSL.

It belongs to the lyase 1 family. Argininosuccinate lyase subfamily.

It is found in the cytoplasm. The catalysed reaction is 2-(N(omega)-L-arginino)succinate = fumarate + L-arginine. The protein operates within amino-acid biosynthesis; L-arginine biosynthesis; L-arginine from L-ornithine and carbamoyl phosphate: step 3/3. The polypeptide is Argininosuccinate lyase (Streptococcus suis (strain 98HAH33)).